Reading from the N-terminus, the 276-residue chain is Dermonecrotic toxin Ls4SicTox-alphaIII1i (276 aa).

The active site involves histidine 3. Residues glutamate 23 and aspartate 25 each coordinate Mg(2+). Histidine 38 (nucleophile) is an active-site residue. Cysteine 42 and cysteine 48 form a disulfide bridge. Position 82 (aspartate 82) interacts with Mg(2+).

It belongs to the arthropod phospholipase D family. Class I subfamily. Mg(2+) serves as cofactor. Expressed by the venom gland.

It is found in the secreted. It carries out the reaction an N-(acyl)-sphingosylphosphocholine = an N-(acyl)-sphingosyl-1,3-cyclic phosphate + choline. The enzyme catalyses an N-(acyl)-sphingosylphosphoethanolamine = an N-(acyl)-sphingosyl-1,3-cyclic phosphate + ethanolamine. The catalysed reaction is a 1-acyl-sn-glycero-3-phosphocholine = a 1-acyl-sn-glycero-2,3-cyclic phosphate + choline. It catalyses the reaction a 1-acyl-sn-glycero-3-phosphoethanolamine = a 1-acyl-sn-glycero-2,3-cyclic phosphate + ethanolamine. Its function is as follows. Dermonecrotic toxins cleave the phosphodiester linkage between the phosphate and headgroup of certain phospholipids (sphingolipid and lysolipid substrates), forming an alcohol (often choline) and a cyclic phosphate. This toxin acts on sphingomyelin (SM). It may also act on ceramide phosphoethanolamine (CPE), lysophosphatidylcholine (LPC) and lysophosphatidylethanolamine (LPE), but not on lysophosphatidylserine (LPS), and lysophosphatidylglycerol (LPG). It acts by transphosphatidylation, releasing exclusively cyclic phosphate products as second products. Induces dermonecrosis, hemolysis, increased vascular permeability, edema, inflammatory response, and platelet aggregation. This Loxosceles sp. (strain 4 GJB-2008) (Recluse spider) protein is Dermonecrotic toxin Ls4SicTox-alphaIII1i.